The primary structure comprises 1550 residues: DNA excision repair protein ERCC-6-like 2 (1550 aa).

The disordered stretch occupies residues 1–23 (MDPSAPQPRAETSGKDIWHPGER). Over residues 12–22 (TSGKDIWHPGE) the composition is skewed to basic and acidic residues. The Helicase ATP-binding domain maps to 135 to 321 (YGHYIHGGGC…WCVMDWAVPG (187 aa)). Position 148 to 155 (148 to 155 (DDMGLGKT)) interacts with ATP. Residues 272–275 (DEAH) carry the DEAH box motif. One can recognise a Helicase C-terminal domain in the interval 512-662 (VLQQLLNHCR…CVVVGSENAK (151 aa)). The Atypical PIP-box signature appears at 785-796 (PGQLTLLQCGFS). 3 disordered regions span residues 808-848 (DSDG…TSKH), 914-1002 (FPDN…SSLR), and 1354-1410 (AETK…TRTG). Basic and acidic residues-rich tracts occupy residues 830–840 (EAKDAGCEKNQ) and 933–953 (TEHT…DKRN). A phosphoserine mark is found at S980 and S983. The segment covering 992 to 1002 (SRVRKRASSLR) has biased composition (basic residues). Residues 1359 to 1388 (SPVSSTQEIDSGKNSQASEDTVTSRSLNSE) are compositionally biased toward polar residues. A phosphoserine mark is found at S1373 and S1376. Over residues 1389–1405 (SETRERRLENTMKDQQD) the composition is skewed to basic and acidic residues.

The protein belongs to the SNF2/RAD54 helicase family. As to quaternary structure, interacts with NEK6. Interacts (via an atypical PIP-box) with PCNA; this interaction facilitates cenrtomeric localization of ERCC6L2. Interacts with CYREN; this interaction is DNA independent. Interacts with XRCC6 and XRCC5. In terms of processing, phosphorylated by NEK6. Expressed in bone marrow (at protein level).

It is found in the nucleus. The protein localises to the cytoplasm. Its subcellular location is the cytoskeleton. It localises to the microtubule organizing center. The protein resides in the centrosome. It is found in the mitochondrion. The protein localises to the chromosome. Its subcellular location is the centromere. Functionally, promotes double-strand break (DSB) end-joining and facilitates programmed recombination by controlling how DNA ends are joined in a spatially oriented manner during repair. Also plays a role in DNA repair by restricting DNA end resection in double strand break (DSB) repair. Facilitates replication of complex DNA regions and regulates the maintenance of chromatin structure. This chain is DNA excision repair protein ERCC-6-like 2, found in Homo sapiens (Human).